Reading from the N-terminus, the 252-residue chain is 2-succinyl-6-hydroxy-2,4-cyclohexadiene-1-carboxylate synthase (252 aa).

This sequence belongs to the AB hydrolase superfamily. MenH family. As to quaternary structure, monomer.

The enzyme catalyses 5-enolpyruvoyl-6-hydroxy-2-succinyl-cyclohex-3-ene-1-carboxylate = (1R,6R)-6-hydroxy-2-succinyl-cyclohexa-2,4-diene-1-carboxylate + pyruvate. It functions in the pathway quinol/quinone metabolism; 1,4-dihydroxy-2-naphthoate biosynthesis; 1,4-dihydroxy-2-naphthoate from chorismate: step 3/7. The protein operates within quinol/quinone metabolism; menaquinone biosynthesis. Its function is as follows. Catalyzes a proton abstraction reaction that results in 2,5-elimination of pyruvate from 2-succinyl-5-enolpyruvyl-6-hydroxy-3-cyclohexene-1-carboxylate (SEPHCHC) and the formation of 2-succinyl-6-hydroxy-2,4-cyclohexadiene-1-carboxylate (SHCHC). The protein is 2-succinyl-6-hydroxy-2,4-cyclohexadiene-1-carboxylate synthase of Salmonella enteritidis PT4 (strain P125109).